A 338-amino-acid polypeptide reads, in one-letter code: Ferredoxin--NADP reductase (338 aa).

FAD is bound by residues Asp-36, Gln-44, Tyr-49, Val-89, Phe-123, Asp-290, and Thr-331.

Belongs to the ferredoxin--NADP reductase type 2 family. Homodimer. FAD serves as cofactor.

The enzyme catalyses 2 reduced [2Fe-2S]-[ferredoxin] + NADP(+) + H(+) = 2 oxidized [2Fe-2S]-[ferredoxin] + NADPH. The sequence is that of Ferredoxin--NADP reductase from Anaplasma phagocytophilum (strain HZ).